The primary structure comprises 64 residues: Conotoxin VnMLCL-042 (64 aa).

The N-terminal stretch at 1–19 is a signal peptide; the sequence is MLCLPVFIILLLLASPAAP. Positions 20–43 are excised as a propeptide; the sequence is NPLQTRIQSNLIRAGPEDANMKTD. Methionine 63 is subject to Methionine amide.

The protein belongs to the conotoxin T superfamily. Expressed by the venom duct.

The protein resides in the secreted. The polypeptide is Conotoxin VnMLCL-042 (Conus ventricosus (Mediterranean cone)).